A 245-amino-acid polypeptide reads, in one-letter code: 8-amino-3,8-dideoxy-manno-octulosonate cytidylyltransferase (245 aa).

This sequence belongs to the KdsB family.

The protein resides in the cytoplasm. It carries out the reaction 8-amino-3,8-dideoxy-alpha-D-manno-octulosonate + CTP = CMP-8-amino-3,8-dideoxy-alpha-D-manno-oct-2-ulosonate + diphosphate. Its pathway is bacterial outer membrane biogenesis; lipopolysaccharide biosynthesis. In terms of biological role, activates KDO8N (a required 8-carbon sugar) for incorporation into bacterial lipopolysaccharide in the Shewanella genus. The polypeptide is 8-amino-3,8-dideoxy-manno-octulosonate cytidylyltransferase (Shewanella sp. (strain W3-18-1)).